We begin with the raw amino-acid sequence, 148 residues long: Ribosomal RNA large subunit methyltransferase H 2 (148 aa).

Residues Leu74, Gly106, and 125–130 (FSKMTF) each bind S-adenosyl-L-methionine.

It belongs to the RNA methyltransferase RlmH family. Homodimer.

Its subcellular location is the cytoplasm. It carries out the reaction pseudouridine(1915) in 23S rRNA + S-adenosyl-L-methionine = N(3)-methylpseudouridine(1915) in 23S rRNA + S-adenosyl-L-homocysteine + H(+). Its function is as follows. Specifically methylates the pseudouridine at position 1915 (m3Psi1915) in 23S rRNA. This Caldanaerobacter subterraneus subsp. tengcongensis (strain DSM 15242 / JCM 11007 / NBRC 100824 / MB4) (Thermoanaerobacter tengcongensis) protein is Ribosomal RNA large subunit methyltransferase H 2.